Here is a 58-residue protein sequence, read N- to C-terminus: Small ribosomal subunit protein bS21 (58 aa).

Belongs to the bacterial ribosomal protein bS21 family.

This chain is Small ribosomal subunit protein bS21, found in Synechococcus sp. (strain CC9605).